The following is a 348-amino-acid chain: Putative methylthioribose-1-phosphate isomerase (348 aa).

Residues 55–57 (RGA), Arg98, and Gln203 each bind substrate. Asp244 serves as the catalytic Proton donor. Residue 253-254 (NK) participates in substrate binding.

Belongs to the eIF-2B alpha/beta/delta subunits family. MtnA subfamily.

It catalyses the reaction 5-(methylsulfanyl)-alpha-D-ribose 1-phosphate = 5-(methylsulfanyl)-D-ribulose 1-phosphate. Catalyzes the interconversion of methylthioribose-1-phosphate (MTR-1-P) into methylthioribulose-1-phosphate (MTRu-1-P). This chain is Putative methylthioribose-1-phosphate isomerase, found in Methanosarcina acetivorans (strain ATCC 35395 / DSM 2834 / JCM 12185 / C2A).